Reading from the N-terminus, the 301-residue chain is GTPase Era (301 aa).

One can recognise an Era-type G domain in the interval 7–175; sequence YCGFIAIVGR…AAIVRKHLPE (169 aa). The G1 stretch occupies residues 15 to 22; sequence GRPNVGKS. GTP is bound at residue 15 to 22; that stretch reads GRPNVGKS. The tract at residues 41-45 is G2; sequence QTTRH. The interval 62–65 is G3; that stretch reads DTPG. GTP is bound by residues 62–66 and 124–127; these read DTPGL and NKVD. Residues 124-127 are G4; that stretch reads NKVD. The tract at residues 154 to 156 is G5; that stretch reads ISA. Positions 206 to 283 constitute a KH type-2 domain; sequence LGAELPYSVT…HLELWVKVKS (78 aa).

The protein belongs to the TRAFAC class TrmE-Era-EngA-EngB-Septin-like GTPase superfamily. Era GTPase family. Monomer.

Its subcellular location is the cytoplasm. The protein resides in the cell inner membrane. In terms of biological role, an essential GTPase that binds both GDP and GTP, with rapid nucleotide exchange. Plays a role in 16S rRNA processing and 30S ribosomal subunit biogenesis and possibly also in cell cycle regulation and energy metabolism. The protein is GTPase Era of Shigella dysenteriae serotype 1 (strain Sd197).